The chain runs to 325 residues: Biotin synthase (325 aa).

In terms of domain architecture, Radical SAM core spans 49–267 (TQVQISTLLS…IAAARISMPR (219 aa)). [4Fe-4S] cluster is bound by residues Cys-64, Cys-68, and Cys-71. The [2Fe-2S] cluster site is built by Cys-108, Cys-139, Cys-199, and Arg-271.

Belongs to the radical SAM superfamily. Biotin synthase family. In terms of assembly, homodimer. [4Fe-4S] cluster is required as a cofactor. It depends on [2Fe-2S] cluster as a cofactor.

The enzyme catalyses (4R,5S)-dethiobiotin + (sulfur carrier)-SH + 2 reduced [2Fe-2S]-[ferredoxin] + 2 S-adenosyl-L-methionine = (sulfur carrier)-H + biotin + 2 5'-deoxyadenosine + 2 L-methionine + 2 oxidized [2Fe-2S]-[ferredoxin]. The protein operates within cofactor biosynthesis; biotin biosynthesis; biotin from 7,8-diaminononanoate: step 2/2. Catalyzes the conversion of dethiobiotin (DTB) to biotin by the insertion of a sulfur atom into dethiobiotin via a radical-based mechanism. The polypeptide is Biotin synthase (Acidiphilium cryptum (strain JF-5)).